The primary structure comprises 837 residues: Probable aldehyde oxidase 4 (837 aa).

A 2Fe-2S ferredoxin-type domain is found at 9–98 (ERVVFELNGE…FCSIITTEGL (90 aa)). Residues Cys-50, Cys-55, Cys-58, and Cys-80 each contribute to the [2Fe-2S] cluster site. Residues 240 to 427 (ISGPREGWYC…LSIFIPHWAS (188 aa)) form the FAD-binding PCMH-type domain.

This sequence belongs to the xanthine dehydrogenase family. In terms of assembly, aldehyde oxidases (AO) are homodimers and heterodimers of AO subunits. Requires [2Fe-2S] cluster as cofactor. The cofactor is FAD. Mo-molybdopterin serves as cofactor.

The enzyme catalyses an aldehyde + O2 + H2O = a carboxylate + H2O2 + H(+). The sequence is that of Probable aldehyde oxidase 4 from Oryza sativa subsp. japonica (Rice).